We begin with the raw amino-acid sequence, 201 residues long: MEITNAEFVISNTDVKKCPAGTFPEYAFIGRSNVGKSSLINMLTGRKGLAMTSATPGKTMLINHFLINNSWYLVDLPGYGYARRGQKGQEQIRTIIEDYILEREQMTNLFVLIDSRLEPQKIDLEFMEWLGENGIPFAIIFTKADKLKGGRLKINISAYLRELRKQWEELPPYFITSSEERLGRTEVLNYIESINKELNSK.

An EngB-type G domain is found at 22–197 (TFPEYAFIGR…LNYIESINKE (176 aa)). Residues 30–37 (GRSNVGKS), 57–61 (GKTML), 75–78 (DLPG), 142–145 (TKAD), and 175–178 (ITSS) each bind GTP. Mg(2+) is bound by residues Ser-37 and Thr-59.

This sequence belongs to the TRAFAC class TrmE-Era-EngA-EngB-Septin-like GTPase superfamily. EngB GTPase family. Requires Mg(2+) as cofactor.

Necessary for normal cell division and for the maintenance of normal septation. The protein is Probable GTP-binding protein EngB of Bacteroides fragilis (strain YCH46).